The following is a 362-amino-acid chain: Phosphoserine aminotransferase (362 aa).

Residues S9 and R42 each coordinate L-glutamate. Pyridoxal 5'-phosphate is bound by residues 76 to 77 (GR), W102, T153, D174, and Q197. K198 is subject to N6-(pyridoxal phosphate)lysine. 239–240 (NT) contributes to the pyridoxal 5'-phosphate binding site.

This sequence belongs to the class-V pyridoxal-phosphate-dependent aminotransferase family. SerC subfamily. Homodimer. Pyridoxal 5'-phosphate is required as a cofactor.

The protein resides in the cytoplasm. It carries out the reaction O-phospho-L-serine + 2-oxoglutarate = 3-phosphooxypyruvate + L-glutamate. It catalyses the reaction 4-(phosphooxy)-L-threonine + 2-oxoglutarate = (R)-3-hydroxy-2-oxo-4-phosphooxybutanoate + L-glutamate. The protein operates within amino-acid biosynthesis; L-serine biosynthesis; L-serine from 3-phospho-D-glycerate: step 2/3. Its pathway is cofactor biosynthesis; pyridoxine 5'-phosphate biosynthesis; pyridoxine 5'-phosphate from D-erythrose 4-phosphate: step 3/5. Catalyzes the reversible conversion of 3-phosphohydroxypyruvate to phosphoserine and of 3-hydroxy-2-oxo-4-phosphonooxybutanoate to phosphohydroxythreonine. This chain is Phosphoserine aminotransferase, found in Shigella boydii serotype 4 (strain Sb227).